Consider the following 316-residue polypeptide: Glycine--tRNA ligase alpha subunit (316 aa).

This sequence belongs to the class-II aminoacyl-tRNA synthetase family. Tetramer of two alpha and two beta subunits.

Its subcellular location is the cytoplasm. It carries out the reaction tRNA(Gly) + glycine + ATP = glycyl-tRNA(Gly) + AMP + diphosphate. The sequence is that of Glycine--tRNA ligase alpha subunit from Cupriavidus taiwanensis (strain DSM 17343 / BCRC 17206 / CCUG 44338 / CIP 107171 / LMG 19424 / R1) (Ralstonia taiwanensis (strain LMG 19424)).